A 151-amino-acid polypeptide reads, in one-letter code: Protein A151R (151 aa).

Zn(2+)-binding residues include His102, Cys109, Cys132, and Cys135. The Thioredoxin WCTKC motif motif lies at 131–135; it reads WCTKC.

It belongs to the asfivirus A151R family. Monomer. Homodimer. Interacts with protein B119L. Interacts with membrane protein E248R. Zn(2+) serves as cofactor.

May participate in a redox cascade for the formation of disulfide bonds in viral proteins. This African swine fever virus (strain Badajoz 1971 Vero-adapted) (Ba71V) protein is Protein A151R.